A 507-amino-acid chain; its full sequence is WD repeat-containing protein fzy-1 (507 aa).

2 disordered regions span residues 1-39 (MNNK…NTNL) and 74-95 (NKEN…SVEG). 2 stretches are compositionally biased toward polar residues: residues 15 to 24 (VRSSAQQNGL) and 74 to 86 (NKEN…SEPN). 4 WD repeats span residues 219-258 (TNEG…TTEY), 313-352 (GHCR…GSTV), 364-406 (EHTG…QKVR), and 411-450 (CETG…KLSH).

The protein belongs to the WD repeat CDC20/Fizzy family.

The protein localises to the chromosome. The protein resides in the cytoplasm. Functionally, plays a role in metaphase-anaphase transition during meiosis I. Required for embryonic anterior-posterior axis formation. This is WD repeat-containing protein fzy-1 from Caenorhabditis elegans.